A 67-amino-acid chain; its full sequence is ORF2p protein (67 aa).

The tract at residues 13-18 (WIGHPV) is important for viral replication in intestinal cells. Residues 22–38 (AIIYPFVGFIPLSLKEV) are membrane-embedded.

It is found in the host cytoplasmic vesicle membrane. Facilitates virus release from intestinal cells in vitro, possibly through the host autophagic pathway. The chain is ORF2p protein from Homo sapiens (Human).